Here is a 151-residue protein sequence, read N- to C-terminus: Small ribosomal subunit protein uS15 (151 aa).

The interval 1 to 20 (MARLHSGKRGSSGSTRPLRT) is disordered.

It belongs to the universal ribosomal protein uS15 family. As to quaternary structure, part of the 30S ribosomal subunit.

This Methanococcus maripaludis (strain C5 / ATCC BAA-1333) protein is Small ribosomal subunit protein uS15.